The following is a 130-amino-acid chain: MPRDFPRTRRVGEQIQRELAELIRDELRDPRLGMVTVSEVTVSRDLAHAKVFVTALGGSDEDNAKTVEVLTRAAGYLRKLLGQRLRIRQVPALHFQHDTAFDRGDRLSRLIDEAVEEDRQQHDDDKPDNG.

This sequence belongs to the RbfA family. In terms of assembly, monomer. Binds 30S ribosomal subunits, but not 50S ribosomal subunits or 70S ribosomes.

The protein localises to the cytoplasm. Functionally, one of several proteins that assist in the late maturation steps of the functional core of the 30S ribosomal subunit. Associates with free 30S ribosomal subunits (but not with 30S subunits that are part of 70S ribosomes or polysomes). Required for efficient processing of 16S rRNA. May interact with the 5'-terminal helix region of 16S rRNA. The chain is Ribosome-binding factor A from Alkalilimnicola ehrlichii (strain ATCC BAA-1101 / DSM 17681 / MLHE-1).